Consider the following 413-residue polypeptide: Palmitoyltransferase ZDHHC6 (413 aa).

The Cytoplasmic segment spans residues 1-24 (MGTFCSVVKFENLQELKRLCHWGP). A helical transmembrane segment spans residues 25 to 45 (IIALGVIAICSAMAMIDSVLW). Residues 46–57 (YWPLHTTGGSVN) are Lumenal-facing. Residues 58–78 (FIMLINWTVMILYNYFNAMFV) traverse the membrane as a helical segment. Topologically, residues 79–143 (GPGFVPLGWK…NCCGYQNHAS (65 aa)) are cytoplasmic. The DHHC domain maps to 99–149 (QYCKVCQAYKAPRSHHCRKCNRCVMKMDHHCPWINNCCGYQNHASFTLFLL). The S-palmitoyl cysteine intermediate role is filled by Cys-129. The helical transmembrane segment at 144-164 (FTLFLLLAPLGCIHAAFIFVM) threads the bilayer. The Lumenal segment spans residues 165-194 (TMYTQLYNRLSFGWNTVKIDMSAARRDPLP). The helical transmembrane segment at 195–215 (IIPFGLAAFAATLFALGLALG) threads the bilayer. At 216-413 (TTIAVGMLFF…QAPEGEKKNR (198 aa)) the chain is on the cytoplasmic side. The region spanning 313 to 398 (VRSVRYKVIE…PRNCVEKCPC (86 aa)) is the SH3 domain. S-palmitoyl cysteine attachment occurs at residues Cys-328, Cys-329, and Cys-343. A Di-lysine motif motif is present at residues 410-413 (KKNR).

This sequence belongs to the DHHC palmitoyltransferase family. In terms of assembly, homooligomerizes. Interacts with SELENOK. Post-translationally, palmitoylated at 3 different sites by ZDHHC16. The combination of the different palmitoylation events strongly affects the quaternary assembly of ZDHHC6, its localization, stability and function. Palmitoylation at Cys-328 accelerates the turnover of ZDHHC6. Depalmitoylated by LYPLA2.

The protein resides in the endoplasmic reticulum membrane. The enzyme catalyses L-cysteinyl-[protein] + hexadecanoyl-CoA = S-hexadecanoyl-L-cysteinyl-[protein] + CoA. The catalysed reaction is L-cysteinyl-[protein] + octadecanoyl-CoA = S-octadecanoyl-L-cysteinyl-[protein] + CoA. In terms of biological role, endoplasmic reticulum palmitoyl acyltransferase that mediates palmitoylation of proteins such as AMFR, CALX, ITPR1 and TFRC. Palmitoylates calnexin (CALX), which is required for its association with the ribosome-translocon complex and efficient folding of glycosylated proteins. Mediates palmitoylation of AMFR, promoting AMFR distribution to the peripheral endoplasmic reticulum. Together with SELENOK, palmitoylates ITPR1 in immune cells, leading to regulate ITPR1 stability and function. Stearoyltransferase that mediates stearoylation of TFRC to inhibit TFRC-mediated activation of the JNK pathway and mitochondrial fragmentation. The chain is Palmitoyltransferase ZDHHC6 from Bos taurus (Bovine).